The sequence spans 388 residues: Xylose repressor (388 aa).

Positions 31–50 (RIAISHELNLNKSTISSLYN) form a DNA-binding region, H-T-H motif.

It belongs to the ROK (NagC/XylR) family.

In terms of biological role, transcriptional repressor of xylose-utilizing enzymes. The chain is Xylose repressor (xylR) from Lactiplantibacillus pentosus (Lactobacillus pentosus).